A 305-amino-acid polypeptide reads, in one-letter code: Tetraspanin-12 (305 aa).

Residues 1–12 lie on the Cytoplasmic side of the membrane; that stretch reads MAREDSVKCLRC. Residues Cys-9 and Cys-12 are each lipidated (S-palmitoyl cysteine). Residues 13-33 traverse the membrane as a helical segment; the sequence is LLYALNLLFWLMSISVLAVSA. Residues 34-59 lie on the Extracellular side of the membrane; the sequence is WMRDYLNNVLTLTAETRVEEAVILTY. A helical transmembrane segment spans residues 60–80; that stretch reads FPVVHPVMIAVCCFLIIVGML. Residues 81 to 89 are Cytoplasmic-facing; that stretch reads GYCGTVKRN. Cys-83 carries S-palmitoyl cysteine lipidation. The chain crosses the membrane as a helical span at residues 90 to 110; it reads LLLLAWYFGTLLVIFCVELAC. The Extracellular portion of the chain corresponds to 111-224; the sequence is GVWTYEQEVM…RGTKQLQVLR (114 aa). A helical transmembrane segment spans residues 225 to 245; that stretch reads FLGISIGVTQILAMILTITLL. At 246–305 the chain is on the cytoplasmic side; it reads WALYYDRREPGTDQMLSLKNDTSQHLSCHSVELLKPSLSRIFEHTSMANSFNTHFEMEEL.

It belongs to the tetraspanin (TM4SF) family. Interacts (when palmitoylated) with ADAM10. Interacts with MMP14/MT1-MMP. Component of a complex, at least composed of TSPAN12, FZD4 and norrin (NDP). Palmitoylated; required for interaction with ADAM10. Expressed in the neonatal retinal vasculature but not other retinal tissues. Also detected in the neonatal meningeal vasculature and in nonvascular cell types, such as the smooth muscle cells in the neonatal intestine.

The protein localises to the cell membrane. Its function is as follows. Regulator of cell surface receptor signal transduction. Acts as a regulator of membrane proteinases such as ADAM10 and MMP14/MT1-MMP. Activates ADAM10-dependent cleavage activity of amyloid precursor protein (APP). Activates MMP14/MT1-MMP-dependent cleavage activity. Plays a central role in retinal vascularization by regulating norrin (NDP) signal transduction. Acts in concert with norrin (NDP) to promote FZD4 multimerization and subsequent activation of FZD4, leading to promote accumulation of beta-catenin (CTNNB1) and stimulate LEF/TCF-mediated transcriptional programs. Suprisingly, it only activate the norrin (NDP)-dependent activation of FZD4, while it does not activate the Wnt-dependent activation of FZD4, suggesting the existence of a Wnt-independent signaling that also promote accumulation the beta-catenin (CTNNB1). This chain is Tetraspanin-12 (Tspan12), found in Mus musculus (Mouse).